We begin with the raw amino-acid sequence, 776 residues long: Protein STRUBBELIG-RECEPTOR FAMILY 3 (776 aa).

An N-terminal signal peptide occupies residues 1–29 (MAAKRSIYCLLLLPLLLSLLIWIPSISLA). The Cytoplasmic segment spans residues 30 to 35 (ATNPDD). Residues 36-56 (VAAINGLFAALGAPVLPGWIA) form a helical membrane-spanning segment. The Extracellular portion of the chain corresponds to 57–316 (SGGDPCGEAW…KGKNSSHTKK (260 aa)). N-linked (GlcNAc...) asparagine glycosylation is present at Asn72. LRR repeat units lie at residues 99–120 (SIRG…TLPV), 121–143 (TLQH…LGTL), 145–167 (FLND…FQNL), 169–191 (GLIN…MENL), 193–215 (TLTT…QGLP), and 216–236 (LQDL…KLLS). An N-linked (GlcNAc...) asparagine glycan is attached at Asn179. N-linked (GlcNAc...) asparagine glycosylation is found at Asn248 and Asn253. Positions 251–311 (MINSTSTAPS…SSENSKGKNS (61 aa)) are disordered. Over residues 254–268 (STSTAPSLSPSLSPT) the composition is skewed to low complexity. Pro residues predominate over residues 269 to 284 (KPAPTRPFSGVPPPPN). Low complexity predominate over residues 298-309 (SEGSSSENSKGK). Asn310 carries an N-linked (GlcNAc...) asparagine glycan. A helical membrane pass occupies residues 317–337 (IILIAFAGVLVFIILVLAILL). Topologically, residues 338 to 776 (LLPKCARRRE…RHGSGDSTAD (439 aa)) are cytoplasmic. The segment at 355–440 (PHQVGADRGS…PPPPPPPPPP (86 aa)) is disordered. The segment covering 381–407 (RSEKVQREPFKKAGEEPKVLHDLERLR) has biased composition (basic and acidic residues). Pro residues predominate over residues 426 to 440 (MPPPPPPPPPPPPPP). One can recognise a Protein kinase domain in the interval 485-763 (FAQENLIGSG…EVVQDLLDMI (279 aa)). ATP contacts are provided by residues 491-499 (IGSGMLGSV) and Lys513.

It belongs to the protein kinase superfamily. Ser/Thr protein kinase family. As to expression, expressed in seedlings, roots, stems, leaves, flowers and siliques.

The protein localises to the membrane. Not essential for epidermal patterning and not redundant with STRUBBELIG. The sequence is that of Protein STRUBBELIG-RECEPTOR FAMILY 3 (SRF3) from Arabidopsis thaliana (Mouse-ear cress).